Reading from the N-terminus, the 156-residue chain is CASP-like protein 5C1 (156 aa).

The Cytoplasmic segment spans residues 1 to 21; the sequence is MENRERAGAGAVGSAGSLGLR. A helical transmembrane segment spans residues 22-42; it reads VGQAVFSSASLLFMSVGVEFF. Topologically, residues 43–46 are extracellular; that stretch reads SYTA. Residues 47–67 traverse the membrane as a helical segment; that stretch reads FCFLVTIMGLVIPWSCTLAMI. Topologically, residues 68 to 81 are cytoplasmic; the sequence is DVYSILVGCPLRVP. Residues 82 to 102 form a helical membrane-spanning segment; sequence GVMVIVVIGDWVLAILSLAAA. At 103 to 132 the chain is on the extracellular side; it reads SSSAAVIDLLLQFHGSHCSPRFCGRYQLSA. A helical transmembrane segment spans residues 133–153; the sequence is MMAFLSWFLTAASSLFNLWFI. Residues 154 to 156 lie on the Cytoplasmic side of the membrane; sequence ASR.

This sequence belongs to the Casparian strip membrane proteins (CASP) family. In terms of assembly, homodimer and heterodimers.

The protein localises to the cell membrane. The protein is CASP-like protein 5C1 of Oryza sativa subsp. japonica (Rice).